Consider the following 229-residue polypeptide: tRNA pseudouridine synthase B (229 aa).

Residue Asp42 is the Nucleophile of the active site.

It belongs to the pseudouridine synthase TruB family. Type 1 subfamily.

It carries out the reaction uridine(55) in tRNA = pseudouridine(55) in tRNA. In terms of biological role, responsible for synthesis of pseudouridine from uracil-55 in the psi GC loop of transfer RNAs. In Ureaplasma urealyticum serovar 10 (strain ATCC 33699 / Western), this protein is tRNA pseudouridine synthase B.